Reading from the N-terminus, the 245-residue chain is Rhamnosyl O-methyltransferase (245 aa).

The first 38 residues, 1–38, serve as a signal peptide directing secretion; it reads MGLVWRSRTSLVGQLIGLVRLVASFAAQLFYRPSDAVA.

The protein belongs to the rhamnosyl O-methyltransferase family.

In terms of biological role, catalyzes the O-methylation of the hydroxyl group located on C-2 of the first rhamnosyl residue linked to the phenolic group of glycosylated phenolphthiocerol dimycocerosates (PGL) and p-hydroxybenzoic acid derivatives (p-HBAD). This is Rhamnosyl O-methyltransferase from Mycobacterium bovis (strain ATCC BAA-935 / AF2122/97).